A 499-amino-acid polypeptide reads, in one-letter code: Chitinase B (499 aa).

The N-terminal stretch at 1–41 is a signal peptide; sequence MSTRKAVIGYYFIPTNQINNYTETDTSVVPFPVSNITPAKA. The GH18 domain maps to 42–425; sequence KQLTHINFSF…AALDRYFNAA (384 aa). Residues 68-69 and 95-98 contribute to the chitin site; these read DA and GGWY. The Proton donor role is filled by Glu-144. Chitin contacts are provided by residues Tyr-145, 212–215, and Trp-403; that span reads MTYD. Positions 438–498 constitute a Chitin-binding type-3 domain; that stretch reads LRYTGVGPGN…DSAWLKVGRL (61 aa).

It belongs to the glycosyl hydrolase 18 family. Chitinase class II subfamily.

It carries out the reaction Random endo-hydrolysis of N-acetyl-beta-D-glucosaminide (1-&gt;4)-beta-linkages in chitin and chitodextrins.. The protein is Chitinase B (chiB) of Serratia marcescens.